A 428-amino-acid chain; its full sequence is Glutamyl-tRNA reductase (428 aa).

Residues 49–52, Ser109, 114–116, and Gln120 contribute to the substrate site; these read TCNR and EGQ. The Nucleophile role is filled by Cys50. 189 to 194 contacts NADP(+); it reads GAGKMA.

It belongs to the glutamyl-tRNA reductase family. In terms of assembly, homodimer.

It carries out the reaction (S)-4-amino-5-oxopentanoate + tRNA(Glu) + NADP(+) = L-glutamyl-tRNA(Glu) + NADPH + H(+). It participates in porphyrin-containing compound metabolism; protoporphyrin-IX biosynthesis; 5-aminolevulinate from L-glutamyl-tRNA(Glu): step 1/2. The protein operates within porphyrin-containing compound metabolism; chlorophyll biosynthesis. Catalyzes the NADPH-dependent reduction of glutamyl-tRNA(Glu) to glutamate 1-semialdehyde (GSA). This chain is Glutamyl-tRNA reductase, found in Rippkaea orientalis (strain PCC 8801 / RF-1) (Cyanothece sp. (strain PCC 8801)).